Here is a 420-residue protein sequence, read N- to C-terminus: MSFPRGSYDPAASNSSPRWPLSAEDANSSREAAGHQKGSDPSGDVRNEELAKLEIAVLAVIFVVAVLGNSSVLLALHRTPRKTSRMHLFIRHLSLADLAVAFFQVLPQLCWDITYRFRGPDWLCRVVKHLQVFAMFASAYMLVVMTADRYIAVCHPLKTLQQPARRSRLMIAASWVLSFLLSTPQYFIFSMIEIEVNNGTKTQDCWATFIQPWGTRAYVTWMTSGVFVVPVVILGTCYGFICYHIWRNVRGKTASRQSKGSGEDVAPFHKGLLVTPCVSSVKTISRAKIRTVKMTFVIVTAYILCWAPFFIVQMWSVWDDNFIWTDSENPSITITALLASLNSCCNPWIYMFFSGHLLQDCVQSFPCCQRMVQKFTKDDSDNMSRRQTSYSNNRSPTNSTGTWKDSPKSSRSIRFIPVST.

A disordered region spans residues 1–45 (MSFPRGSYDPAASNSSPRWPLSAEDANSSREAAGHQKGSDPSGDV). Residues 1 to 54 (MSFPRGSYDPAASNSSPRWPLSAEDANSSREAAGHQKGSDPSGDVRNEELAKLE) lie on the Extracellular side of the membrane. N27 is a glycosylation site (N-linked (GlcNAc...) asparagine). Over residues 32–45 (AAGHQKGSDPSGDV) the composition is skewed to basic and acidic residues. A helical transmembrane segment spans residues 55–75 (IAVLAVIFVVAVLGNSSVLLA). Residues 76–92 (LHRTPRKTSRMHLFIRH) are Cytoplasmic-facing. The helical transmembrane segment at 93–113 (LSLADLAVAFFQVLPQLCWDI) threads the bilayer. The Extracellular segment spans residues 114–125 (TYRFRGPDWLCR). A disulfide bridge connects residues C124 and C205. A helical transmembrane segment spans residues 126-146 (VVKHLQVFAMFASAYMLVVMT). At 147–168 (ADRYIAVCHPLKTLQQPARRSR) the chain is on the cytoplasmic side. The chain crosses the membrane as a helical span at residues 169 to 189 (LMIAASWVLSFLLSTPQYFIF). Residues 190 to 225 (SMIEIEVNNGTKTQDCWATFIQPWGTRAYVTWMTSG) are Extracellular-facing. N198 carries an N-linked (GlcNAc...) asparagine glycan. Residues 226-246 (VFVVPVVILGTCYGFICYHIW) traverse the membrane as a helical segment. Over 247-294 (RNVRGKTASRQSKGSGEDVAPFHKGLLVTPCVSSVKTISRAKIRTVKM) the chain is Cytoplasmic. A helical transmembrane segment spans residues 295 to 315 (TFVIVTAYILCWAPFFIVQMW). The Extracellular portion of the chain corresponds to 316–331 (SVWDDNFIWTDSENPS). A helical transmembrane segment spans residues 332–352 (ITITALLASLNSCCNPWIYMF). Residues 353 to 420 (FSGHLLQDCV…RSIRFIPVST (68 aa)) are Cytoplasmic-facing. S-palmitoyl cysteine attachment occurs at residues C367 and C368. The interval 379-411 (DSDNMSRRQTSYSNNRSPTNSTGTWKDSPKSSR) is disordered. Positions 385-403 (RRQTSYSNNRSPTNSTGTW) are enriched in polar residues. S406 bears the Phosphoserine mark.

It belongs to the G-protein coupled receptor 1 family. Vasopressin/oxytocin receptor subfamily.

Its subcellular location is the cell membrane. In terms of biological role, receptor for arginine vasopressin. The activity of this receptor is mediated by G proteins which activate a phosphatidyl-inositol-calcium second messenger system. Involved in social memory formation. This is Vasopressin V1a receptor (Avpr1a) from Microtus montanus (Montane vole).